The following is a 37-amino-acid chain: Large ribosomal subunit protein bL36 (37 aa).

Belongs to the bacterial ribosomal protein bL36 family.

The protein is Large ribosomal subunit protein bL36 of Heliobacterium modesticaldum (strain ATCC 51547 / Ice1).